Consider the following 567-residue polypeptide: Organic cation transporter-like protein (567 aa).

The Cytoplasmic portion of the chain corresponds to 1-21 (MGYDEAIIHLGDFGRYQKIIY). The helical transmembrane segment at 22–42 (FLICLTSIPVAFHKLAGVFLL) threads the bilayer. Topologically, residues 43 to 127 (AKPDFRCALP…TEWNLVCGRD (85 aa)) are extracellular. 4 N-linked (GlcNAc...) asparagine glycosylation sites follow: N55, N67, N89, and N97. Residues 128–148 (FMAATSDSLFMLGVLLGSIVF) traverse the membrane as a helical segment. Over 149–158 (GQLSDKYGRK) the chain is Cytoplasmic. Residues 159–179 (PILFASLVIQVLFGVLAGVAP) form a helical membrane-spanning segment. Topologically, residues 180–189 (EYFTYTFARL) are extracellular. The helical transmembrane segment at 190 to 210 (MVGATTSGVFLVAYVVAMEMV) threads the bilayer. Residues 211 to 219 (GPDKRLYAG) are Cytoplasmic-facing. Residues 220 to 240 (IFVMMFFSVGFMLTAVFAYFV) form a helical membrane-spanning segment. Over 241-244 (HDWR) the chain is Extracellular. A helical transmembrane segment spans residues 245–265 (WLQIALTLPGLIFMFYYWIIP). Residues 266 to 343 (ESARWLLLKG…LFCYPNLRRK (78 aa)) lie on the Cytoplasmic side of the membrane. Residues 304–326 (LDEGENSEEKAKQKLEDQELDEG) are disordered. Over residues 310–320 (SEEKAKQKLED) the composition is skewed to basic and acidic residues. Residues 344-364 (TLLIFLDWLVTSGVYYGLSWN) traverse the membrane as a helical segment. Residues 365–371 (TSNLGGN) are Extracellular-facing. The chain crosses the membrane as a helical span at residues 372–392 (VLLNFVISGAVEIPAYIFLLL). The Cytoplasmic segment spans residues 393–400 (TLNRWGRR). A helical membrane pass occupies residues 401–421 (SILCGCLVMAGLSLLATVIIP). Residues 422–427 (QRMHTL) lie on the Extracellular side of the membrane. A helical transmembrane segment spans residues 428-448 (IVACAMLGKLAITASYGTVYI). The Cytoplasmic portion of the chain corresponds to 449–462 (FSAEQFPTVVRNVA). A helical transmembrane segment spans residues 463–483 (LGAASMVARISGMMAPFLNFL). The Extracellular segment spans residues 484 to 489 (ATIWKP). Residues 490–510 (LPLLICGSLTLVAGLLSLLLP) traverse the membrane as a helical segment. Over 511–567 (ETHNKPMLETIADGERFGKKTKADVYLETGQELRAPEAQPLKGSGETNGSTIANGHK) the chain is Cytoplasmic. Positions 546 to 567 (PEAQPLKGSGETNGSTIANGHK) are disordered. A compositionally biased stretch (polar residues) spans 555-567 (GETNGSTIANGHK).

The protein belongs to the major facilitator (TC 2.A.1) superfamily. Organic cation transporter (TC 2.A.1.19) family.

Its subcellular location is the membrane. In terms of biological role, probably transports organic cations. The polypeptide is Organic cation transporter-like protein (Orct2) (Drosophila melanogaster (Fruit fly)).